A 440-amino-acid chain; its full sequence is UDP-N-acetylmuramoylalanine--D-glutamate ligase (440 aa).

109 to 115 provides a ligand contact to ATP; sequence GTNGKTT.

The protein belongs to the MurCDEF family.

The protein resides in the cytoplasm. The enzyme catalyses UDP-N-acetyl-alpha-D-muramoyl-L-alanine + D-glutamate + ATP = UDP-N-acetyl-alpha-D-muramoyl-L-alanyl-D-glutamate + ADP + phosphate + H(+). Its pathway is cell wall biogenesis; peptidoglycan biosynthesis. Its function is as follows. Cell wall formation. Catalyzes the addition of glutamate to the nucleotide precursor UDP-N-acetylmuramoyl-L-alanine (UMA). This chain is UDP-N-acetylmuramoylalanine--D-glutamate ligase, found in Rubrobacter xylanophilus (strain DSM 9941 / JCM 11954 / NBRC 16129 / PRD-1).